The primary structure comprises 458 residues: Tyrosine phenol-lyase (458 aa).

Lys-258 carries the N6-(pyridoxal phosphate)lysine modification.

Belongs to the beta-eliminating lyase family. Homotetramer. Pyridoxal 5'-phosphate serves as cofactor.

It catalyses the reaction L-tyrosine + H2O = phenol + pyruvate + NH4(+). The polypeptide is Tyrosine phenol-lyase (tpl) (Symbiobacterium sp. (strain SC-1)).